Reading from the N-terminus, the 129-residue chain is Small ribosomal subunit protein uS13 (129 aa).

Residues 96 to 129 (GLPVRGQRTSTNARTRKGPRKTVGVSKAAAAAKA) are disordered.

Belongs to the universal ribosomal protein uS13 family. Part of the 30S ribosomal subunit. Forms a loose heterodimer with protein S19. Forms two bridges to the 50S subunit in the 70S ribosome.

Functionally, located at the top of the head of the 30S subunit, it contacts several helices of the 16S rRNA. In the 70S ribosome it contacts the 23S rRNA (bridge B1a) and protein L5 of the 50S subunit (bridge B1b), connecting the 2 subunits; these bridges are implicated in subunit movement. Contacts the tRNAs in the A and P-sites. The chain is Small ribosomal subunit protein uS13 from Opitutus terrae (strain DSM 11246 / JCM 15787 / PB90-1).